A 485-amino-acid chain; its full sequence is Adenosylhomocysteinase (485 aa).

3 residues coordinate substrate: Thr60, Asp146, and Glu208. Position 209 to 211 (209 to 211 (TTT)) interacts with NAD(+). Lys238 and Asp242 together coordinate substrate. Residues Asn243, 272–277 (GYGDVG), Glu295, Asn330, 351–353 (IGH), and Asn399 contribute to the NAD(+) site.

Belongs to the adenosylhomocysteinase family. It depends on NAD(+) as a cofactor.

It localises to the cytoplasm. The catalysed reaction is S-adenosyl-L-homocysteine + H2O = L-homocysteine + adenosine. It functions in the pathway amino-acid biosynthesis; L-homocysteine biosynthesis; L-homocysteine from S-adenosyl-L-homocysteine: step 1/1. In terms of biological role, may play a key role in the regulation of the intracellular concentration of adenosylhomocysteine. The protein is Adenosylhomocysteinase of Streptomyces griseus subsp. griseus (strain JCM 4626 / CBS 651.72 / NBRC 13350 / KCC S-0626 / ISP 5235).